The sequence spans 196 residues: Calcineurin B homologous protein 2 (196 aa).

G2 carries N-myristoyl glycine lipidation. EF-hand domains lie at 26 to 61 (ASLL…AVNP), 71 to 106 (FPDG…PKKP), 111 to 146 (SRRN…MVGV), and 152 to 187 (QLEN…MDVE). A Phosphoserine modification is found at S27. 5 residues coordinate Ca(2+): D124, D126, D128, K130, and E135. The Nuclear export signal motif lies at 137–148 (LQVLRLMVGVQV). Residues D165, D167, D169, and E176 each coordinate Ca(2+).

The protein belongs to the calcineurin regulatory subunit family. CHP subfamily. In terms of assembly, interacts with PPP3CA. Interacts with SLC9A1/NHE1; the interaction occurs in a calcium-dependent manner. In terms of tissue distribution, expressed in malignantly transformed cells but not detected in normal tissues.

The protein resides in the nucleus. Its subcellular location is the cytoplasm. The protein localises to the cell membrane. Its function is as follows. Functions as an integral cofactor in cell pH regulation by controlling plasma membrane-type Na(+)/H(+) exchange activity. Binds to and activates SLC9A1/NHE1 in a serum-independent manner, thus increasing pH and protecting cells from serum deprivation-induced death. Also plays a role in the regulation of cell proliferation and tumor growth by increasing the phosphatase activity of PPP3CA in a calcium-dependent manner. Activator of the calcineurin/NFAT signaling pathway. Involved in the cytoplasmic translocation of the transcription factor NFATC3 to the nucleus. In Homo sapiens (Human), this protein is Calcineurin B homologous protein 2 (CHP2).